The primary structure comprises 355 residues: MTLIVEAKQRLDAFSLDAAFTSERGVTALFGRSGSGKTSMIRIIAGLARPDEGRVVLDGEPLTETTTGIFVPKHRRRFGYVFQEARLFPHLSIRANLTYGRWFAARTAHGESFDHIVDLLGIETLLERSPAKLSGGEKQRVAIGRALLSSPRLLLMDEPLAALDDARKAEILPYLERLRDETDIPIVYVSHSIAEVARLANQVVVMRDGKVEATGPAIDILSRPSTASDRREAGALLEGTVESFDARHHLSTVALKSCQVHIPGAALAPGKSVRIRIPSRDVMLATTRPEGLSALNILEARIDGMSSTEDGTVEIRLDCGGDIILSRITTLSCERLDLRQGRAIFAIIKTVALEA.

An ABC transporter domain is found at 1-233; the sequence is MTLIVEAKQR…PSTASDRREA (233 aa). 31-38 is a binding site for ATP; it reads GRSGSGKT. The Mop domain occupies 291 to 355; the sequence is GLSALNILEA…AIIKTVALEA (65 aa).

It belongs to the ABC transporter superfamily. Molybdate importer (TC 3.A.1.8) family. In terms of assembly, the complex is composed of two ATP-binding proteins (ModC), two transmembrane proteins (ModB) and a solute-binding protein (ModA).

Its subcellular location is the cell inner membrane. The catalysed reaction is molybdate(out) + ATP + H2O = molybdate(in) + ADP + phosphate + H(+). Its function is as follows. Part of the ABC transporter complex ModABC involved in molybdenum import. Responsible for energy coupling to the transport system. This Rhizobium johnstonii (strain DSM 114642 / LMG 32736 / 3841) (Rhizobium leguminosarum bv. viciae) protein is Molybdenum import ATP-binding protein ModC.